Reading from the N-terminus, the 326-residue chain is UDP-3-O-acylglucosamine N-acyltransferase (326 aa).

Catalysis depends on histidine 225, which acts as the Proton acceptor.

It belongs to the transferase hexapeptide repeat family. LpxD subfamily. Homotrimer.

It carries out the reaction a UDP-3-O-[(3R)-3-hydroxyacyl]-alpha-D-glucosamine + a (3R)-hydroxyacyl-[ACP] = a UDP-2-N,3-O-bis[(3R)-3-hydroxyacyl]-alpha-D-glucosamine + holo-[ACP] + H(+). It functions in the pathway bacterial outer membrane biogenesis; LPS lipid A biosynthesis. In terms of biological role, catalyzes the N-acylation of UDP-3-O-acylglucosamine using 3-hydroxyacyl-ACP as the acyl donor. Is involved in the biosynthesis of lipid A, a phosphorylated glycolipid that anchors the lipopolysaccharide to the outer membrane of the cell. This is UDP-3-O-acylglucosamine N-acyltransferase from Acidovorax ebreus (strain TPSY) (Diaphorobacter sp. (strain TPSY)).